Reading from the N-terminus, the 825-residue chain is Penicillin-binding protein 1A (825 aa).

The Cytoplasmic segment spans residues 1–6; that stretch reads MKFIKR. Residues 7–27 form a helical; Signal-anchor for type II membrane protein membrane-spanning segment; that stretch reads LLVFSLICIILGVTTIFGFYF. Residues 28-825 are Periplasmic-facing; sequence YVKSDLPDVA…YSTSSGEELF (798 aa). Residues 48-216 form a transglycosylase region; sequence MQVFSQDGKL…STMNPIYSVE (169 aa). Glu-86 functions as the Proton donor; for transglycosylase activity in the catalytic mechanism. The interval 413 to 752 is transpeptidase; it reads PRTQDGAITA…GKTALPAWVE (340 aa). Catalysis depends on Ser-471, which acts as the Acyl-ester intermediate; for transpeptidase activity.

The protein in the N-terminal section; belongs to the glycosyltransferase 51 family. In the C-terminal section; belongs to the transpeptidase family.

The protein resides in the cell inner membrane. It carries out the reaction [GlcNAc-(1-&gt;4)-Mur2Ac(oyl-L-Ala-gamma-D-Glu-L-Lys-D-Ala-D-Ala)](n)-di-trans,octa-cis-undecaprenyl diphosphate + beta-D-GlcNAc-(1-&gt;4)-Mur2Ac(oyl-L-Ala-gamma-D-Glu-L-Lys-D-Ala-D-Ala)-di-trans,octa-cis-undecaprenyl diphosphate = [GlcNAc-(1-&gt;4)-Mur2Ac(oyl-L-Ala-gamma-D-Glu-L-Lys-D-Ala-D-Ala)](n+1)-di-trans,octa-cis-undecaprenyl diphosphate + di-trans,octa-cis-undecaprenyl diphosphate + H(+). It catalyses the reaction Preferential cleavage: (Ac)2-L-Lys-D-Ala-|-D-Ala. Also transpeptidation of peptidyl-alanyl moieties that are N-acyl substituents of D-alanine.. The protein operates within cell wall biogenesis; peptidoglycan biosynthesis. Its function is as follows. Cell wall formation. Synthesis of cross-linked peptidoglycan from the lipid intermediates. The enzyme has a penicillin-insensitive transglycosylase N-terminal domain (formation of linear glycan strands) and a penicillin-sensitive transpeptidase C-terminal domain (cross-linking of the peptide subunits). This chain is Penicillin-binding protein 1A (mrcA), found in Vibrio cholerae serotype O1 (strain ATCC 39315 / El Tor Inaba N16961).